Consider the following 203-residue polypeptide: ATP-dependent Clp protease proteolytic subunit (203 aa).

S107 functions as the Nucleophile in the catalytic mechanism. The active site involves H132.

It belongs to the peptidase S14 family. Fourteen ClpP subunits assemble into 2 heptameric rings which stack back to back to give a disk-like structure with a central cavity, resembling the structure of eukaryotic proteasomes.

The protein localises to the cytoplasm. It carries out the reaction Hydrolysis of proteins to small peptides in the presence of ATP and magnesium. alpha-casein is the usual test substrate. In the absence of ATP, only oligopeptides shorter than five residues are hydrolyzed (such as succinyl-Leu-Tyr-|-NHMec, and Leu-Tyr-Leu-|-Tyr-Trp, in which cleavage of the -Tyr-|-Leu- and -Tyr-|-Trp bonds also occurs).. In terms of biological role, cleaves peptides in various proteins in a process that requires ATP hydrolysis. Has a chymotrypsin-like activity. Plays a major role in the degradation of misfolded proteins. This chain is ATP-dependent Clp protease proteolytic subunit, found in Shewanella sediminis (strain HAW-EB3).